We begin with the raw amino-acid sequence, 310 residues long: Vomeronasal type-1 receptor 3 (310 aa).

Topologically, residues 1–5 are extracellular; that stretch reads MASKD. The chain crosses the membrane as a helical span at residues 6–26; it reads FAIGMILSQIMVGFLGNFFLL. The Cytoplasmic segment spans residues 27–50; sequence YHYSFLHFTRGMLQSTDLTLKHLT. The chain crosses the membrane as a helical span at residues 51 to 71; that stretch reads IANSLVILSKGIPQTMAAFGL. Residues 72–91 lie on the Extracellular side of the membrane; the sequence is KDSLSDIGCKFVFYVHRVGR. The helical transmembrane segment at 92 to 112 threads the bilayer; the sequence is AVCTGNACLLSVFQVITISSS. Topologically, residues 113-129 are cytoplasmic; sequence EFRWAELKLHAHKYIRS. A helical transmembrane segment spans residues 130–150; the sequence is FILVLCWILNTLVNITVPLHV. Topologically, residues 151-186 are extracellular; it reads TGKWNSINSTKTNDYGYCSGGSRSRIPHSLHIVLLS. An N-linked (GlcNAc...) asparagine glycan is attached at asparagine 158. Residues 187 to 207 form a helical membrane-spanning segment; that stretch reads SLDVLCLGLMTLASGSMVFIL. At 208–235 the chain is on the cytoplasmic side; the sequence is HRLKQQVQHIHGTNLSPRSSPESRVTQS. The helical transmembrane segment at 236–258 threads the bilayer; it reads ILVLVSTLCYFTRSPPSLHMSLF. Over 259–263 the chain is Extracellular; the sequence is PNPSW. Residues 264-284 traverse the membrane as a helical segment; the sequence is WPLNASALITACFPTVSPFVL. The Cytoplasmic portion of the chain corresponds to 285–310; sequence MSRHPRIPRLGSACCGRNPQFPKLVR.

Belongs to the G-protein coupled receptor 1 family.

Its subcellular location is the cell membrane. In terms of biological role, putative pheromone receptor. This Pan troglodytes (Chimpanzee) protein is Vomeronasal type-1 receptor 3 (VN1R3).